We begin with the raw amino-acid sequence, 265 residues long: MAAATMALSSPSFAGQAVKLSPSASEISGNGRITMRKAVAKSAPSSSPWXXXXXXXXXXXXXXXXXXXXXXXXXXXXXXXXXXXXXXXXXXXXXXXXXXXXXXXXXXXXXXXXXXXXXXXXXXXXXXXXXXXXXXXXXXXXXXXXXXXXSLVHAQSILAIWACQVVLMGAVEGYRIAGGPLGEVVDPLYPGGSFDPLGLAEDPEAFAELKVKEIKNGRLAMFSMFGFFVQAIVTGKGPLENLADHLADPVNNNAWAFATNFVPGK.

Residues 1-34 (MAAATMALSSPSFAGQAVKLSPSASEISGNGRIT) constitute a chloroplast transit peptide. The chain crosses the membrane as a helical span at residues 151-171 (LVHAQSILAIWACQVVLMGAV). Chlorophyll b is bound by residues Val-152, Ser-156, Gln-164, Glu-172, Arg-175, and Leu-181. Chlorophyll a-binding residues include Lys-212, Glu-213, Asn-216, Arg-218, Gln-230, His-245, and Ala-254. Residues 219–239 (LAMFSMFGFFVQAIVTGKGPL) form a helical membrane-spanning segment. Residue Phe-261 participates in chlorophyll b binding.

It belongs to the light-harvesting chlorophyll a/b-binding (LHC) protein family. As to quaternary structure, the LHC complex consists of chlorophyll a-b binding proteins. The cofactor is Binds at least 14 chlorophylls (8 Chl-a and 6 Chl-b) and carotenoids such as lutein and neoxanthin.. Photoregulated by reversible phosphorylation of its threonine residues.

It localises to the plastid. The protein resides in the chloroplast thylakoid membrane. Functionally, the light-harvesting complex (LHC) functions as a light receptor, it captures and delivers excitation energy to photosystems with which it is closely associated. The protein is Chlorophyll a-b binding protein 1C, chloroplastic (CAB1C) of Solanum lycopersicum (Tomato).